Consider the following 282-residue polypeptide: Bis(5'-nucleosyl)-tetraphosphatase, symmetrical (282 aa).

This sequence belongs to the Ap4A hydrolase family.

The enzyme catalyses P(1),P(4)-bis(5'-adenosyl) tetraphosphate + H2O = 2 ADP + 2 H(+). Its function is as follows. Hydrolyzes diadenosine 5',5'''-P1,P4-tetraphosphate to yield ADP. The chain is Bis(5'-nucleosyl)-tetraphosphatase, symmetrical from Escherichia coli O7:K1 (strain IAI39 / ExPEC).